The following is a 96-amino-acid chain: UPF0235 protein YggU (96 aa).

It belongs to the UPF0235 family.

This Shigella flexneri protein is UPF0235 protein YggU.